A 158-amino-acid polypeptide reads, in one-letter code: Low molecular weight phosphotyrosine protein phosphatase (158 aa).

Ala2 bears the N-acetylalanine mark. Cys13 acts as the Nucleophile in catalysis. Residue Arg19 is part of the active site. Catalysis depends on Asp130, which acts as the Proton donor. Tyr132 and Tyr133 each carry phosphotyrosine.

It belongs to the low molecular weight phosphotyrosine protein phosphatase family. In terms of assembly, interacts with EPHA2; dephosphorylates EPHA2. Interacts with EPHB1. As to quaternary structure, interacts with the SH3 domain of SPTAN1. There is no interaction observed for isoform 2. Phosphorylated by LCK. Phosphorylation at Tyr-132 increases its phosphatase activity. Widely expressed with highest levels in brain and liver and lowest levels in muscle.

The protein localises to the cytoplasm. The enzyme catalyses O-phospho-L-tyrosyl-[protein] + H2O = L-tyrosyl-[protein] + phosphate. It catalyses the reaction a phosphate monoester + H2O = an alcohol + phosphate. With respect to regulation, inhibited by sulfhydryl reagents. Acts on tyrosine phosphorylated proteins, low-MW aryl phosphates and natural and synthetic acyl phosphates with differences in substrate specificity between isoform 1 and isoform 2. The chain is Low molecular weight phosphotyrosine protein phosphatase from Mus musculus (Mouse).